A 309-amino-acid polypeptide reads, in one-letter code: Porphobilinogen deaminase (309 aa).

The residue at position 241 (C241) is an S-(dipyrrolylmethanemethyl)cysteine.

It belongs to the HMBS family. As to quaternary structure, monomer. Requires dipyrromethane as cofactor.

It catalyses the reaction 4 porphobilinogen + H2O = hydroxymethylbilane + 4 NH4(+). The protein operates within porphyrin-containing compound metabolism; protoporphyrin-IX biosynthesis; coproporphyrinogen-III from 5-aminolevulinate: step 2/4. Its function is as follows. Tetrapolymerization of the monopyrrole PBG into the hydroxymethylbilane pre-uroporphyrinogen in several discrete steps. In Bacillus cereus (strain AH187), this protein is Porphobilinogen deaminase.